Consider the following 191-residue polypeptide: Ribonuclease HII (191 aa).

The 185-residue stretch at 7–191 folds into the RNase H type-2 domain; that stretch reads ILMAGVDEVG…YSPVADLISK (185 aa). A divalent metal cation-binding residues include aspartate 13, glutamate 14, and aspartate 103.

It belongs to the RNase HII family. The cofactor is Mn(2+). Requires Mg(2+) as cofactor.

The protein resides in the cytoplasm. It catalyses the reaction Endonucleolytic cleavage to 5'-phosphomonoester.. Endonuclease that specifically degrades the RNA of RNA-DNA hybrids. This is Ribonuclease HII from Legionella pneumophila subsp. pneumophila (strain Philadelphia 1 / ATCC 33152 / DSM 7513).